Consider the following 95-residue polypeptide: MEKTSLKLIFLFSLTVIAFCSSLGDAREMVKAEVNCIGGKCPEGKKNCNCMPPIAHVMDDIRPCNTDGDCYKFCPRECELGTCYCRCDYGCTCTC.

Positions 1-26 (MEKTSLKLIFLFSLTVIAFCSSLGDA) are cleaved as a signal peptide. Cystine bridges form between C48–C95, C64–C83, C70–C91, and C74–C93.

The protein belongs to the DEFL family.

It localises to the secreted. This chain is Putative defensin-like protein 262, found in Arabidopsis thaliana (Mouse-ear cress).